The sequence spans 357 residues: uncharacterized protein (357 aa).

The signal sequence occupies residues 1–19 (MKRILSFIFIILFFNSSYA).

This is an uncharacterized protein from Rickettsia prowazekii (strain Madrid E).